The sequence spans 1760 residues: Chitin synthase A (1760 aa).

A glycan (N-linked (GlcNAc...) asparagine) is linked at Asn-157. The next 2 helical transmembrane spans lie at 729 to 749 (IWTGFVWALTFWIPSFVLRFV) and 765 to 785 (LVLVFLILLFNAIVCFYIIAF). 2 N-linked (GlcNAc...) asparagine glycosylation sites follow: Asn-876 and Asn-996. Residues 1027–1047 (ILLAFTCLICAVILVKFLAAL) traverse the membrane as a helical segment. The N-linked (GlcNAc...) asparagine glycan is linked to Asn-1392. A run of 3 helical transmembrane segments spans residues 1417-1437 (FVVLVDLLGTIILPATCVYLG), 1449-1469 (IPIISIAILAGVYGLQAIIFI), and 1477-1497 (IGWMIIYICAYPIYSFVLPMY). Residues Asn-1557, Asn-1645, and Asn-1650 are each glycosylated (N-linked (GlcNAc...) asparagine). The disordered stretch occupies residues 1670-1691 (DNLLGVPRPNSRSPVGGYTSRP). One can recognise a DEK-C domain in the interval 1702-1758 (GPDEMAITDAIRSCLAEVDLDTVTKKQVRALVEQRLQATLTGDKRAFLDRQIDQELA).

The protein belongs to the chitin synthase family. Class V subfamily.

Its subcellular location is the cell membrane. It carries out the reaction [(1-&gt;4)-N-acetyl-beta-D-glucosaminyl](n) + UDP-N-acetyl-alpha-D-glucosamine = [(1-&gt;4)-N-acetyl-beta-D-glucosaminyl](n+1) + UDP + H(+). In terms of biological role, polymerizes chitin, a structural polymer of the cell wall and septum, by transferring the sugar moiety of UDP-GlcNAc to the non-reducing end of the growing chitin polymer. Plays an important role in cell-wall formation during both hyphal growth and conidiation. The protein is Chitin synthase A of Aspergillus oryzae (strain ATCC 42149 / RIB 40) (Yellow koji mold).